The primary structure comprises 417 residues: NADH-quinone oxidoreductase subunit D (417 aa).

The protein belongs to the complex I 49 kDa subunit family. In terms of assembly, NDH-1 is composed of 14 different subunits. Subunits NuoB, C, D, E, F, and G constitute the peripheral sector of the complex.

The protein resides in the cell inner membrane. It catalyses the reaction a quinone + NADH + 5 H(+)(in) = a quinol + NAD(+) + 4 H(+)(out). NDH-1 shuttles electrons from NADH, via FMN and iron-sulfur (Fe-S) centers, to quinones in the respiratory chain. The immediate electron acceptor for the enzyme in this species is believed to be ubiquinone. Couples the redox reaction to proton translocation (for every two electrons transferred, four hydrogen ions are translocated across the cytoplasmic membrane), and thus conserves the redox energy in a proton gradient. In Methylibium petroleiphilum (strain ATCC BAA-1232 / LMG 22953 / PM1), this protein is NADH-quinone oxidoreductase subunit D.